The chain runs to 459 residues: Argininosuccinate lyase (459 aa).

Belongs to the lyase 1 family. Argininosuccinate lyase subfamily.

It is found in the cytoplasm. It catalyses the reaction 2-(N(omega)-L-arginino)succinate = fumarate + L-arginine. It participates in amino-acid biosynthesis; L-arginine biosynthesis; L-arginine from L-ornithine and carbamoyl phosphate: step 3/3. In Staphylococcus aureus (strain MRSA252), this protein is Argininosuccinate lyase.